Consider the following 254-residue polypeptide: Syntaxin-6 (254 aa).

Residues 1-233 (MSMEDPFFVV…VSHMTSDRRQ (233 aa)) lie on the Cytoplasmic side of the membrane. Residues 46 to 72 (TTNELRNNLRSIEWDLEDLDETISIVE) adopt a coiled-coil conformation. The segment at 103-138 (KDQMSNSSMQALAERKNRQALLGESSSQSWSSGPDK) is disordered. Residues 162–224 (QLIVEQQDEQ…DNVMKKLAKV (63 aa)) form the t-SNARE coiled-coil homology domain. Residues 234-254 (WCAIIVLFVILLVVLVLFLVL) form a helical; Anchor for type IV membrane protein membrane-spanning segment.

This sequence belongs to the syntaxin family.

Its subcellular location is the golgi apparatus membrane. It localises to the golgi apparatus. It is found in the trans-Golgi network membrane. The protein resides in the recycling endosome membrane. SNARE promoting movement of transport vesicles to target membranes. Targets endosomes to the trans-Golgi network, and may therefore function in retrograde trafficking. Together with SNARE STX12, promotes movement of vesicles from endosomes to the cell membrane, and may therefore function in the endocytic recycling pathway. The sequence is that of Syntaxin-6 (STX6) from Gallus gallus (Chicken).